A 376-amino-acid polypeptide reads, in one-letter code: Actin (376 aa).

It belongs to the actin family.

The protein localises to the cytoplasm. The protein resides in the cytoskeleton. It carries out the reaction ATP + H2O = ADP + phosphate + H(+). Its function is as follows. Actins are highly conserved proteins that are involved in various types of cell motility and are ubiquitously expressed in all eukaryotic cells. This chain is Actin, found in Trypanosoma cruzi.